The sequence spans 153 residues: Endoribonuclease YbeY (153 aa).

Positions 118, 122, and 128 each coordinate Zn(2+).

The protein belongs to the endoribonuclease YbeY family. Zn(2+) serves as cofactor.

Its subcellular location is the cytoplasm. In terms of biological role, single strand-specific metallo-endoribonuclease involved in late-stage 70S ribosome quality control and in maturation of the 3' terminus of the 16S rRNA. In Staphylococcus saprophyticus subsp. saprophyticus (strain ATCC 15305 / DSM 20229 / NCIMB 8711 / NCTC 7292 / S-41), this protein is Endoribonuclease YbeY.